The sequence spans 239 residues: Pyridoxal 5'-phosphate synthase subunit PdxS (239 aa).

Asp21 contacts D-ribose 5-phosphate. The active-site Schiff-base intermediate with D-ribose 5-phosphate is Lys78. Gly150 is a D-ribose 5-phosphate binding site. Arg162 is a D-glyceraldehyde 3-phosphate binding site. D-ribose 5-phosphate is bound by residues Gly211 and Gly232 to Ser233.

This sequence belongs to the PdxS/SNZ family. As to quaternary structure, in the presence of PdxT, forms a dodecamer of heterodimers.

It carries out the reaction aldehydo-D-ribose 5-phosphate + D-glyceraldehyde 3-phosphate + L-glutamine = pyridoxal 5'-phosphate + L-glutamate + phosphate + 3 H2O + H(+). It participates in cofactor biosynthesis; pyridoxal 5'-phosphate biosynthesis. Its function is as follows. Catalyzes the formation of pyridoxal 5'-phosphate from ribose 5-phosphate (RBP), glyceraldehyde 3-phosphate (G3P) and ammonia. The ammonia is provided by the PdxT subunit. Can also use ribulose 5-phosphate and dihydroxyacetone phosphate as substrates, resulting from enzyme-catalyzed isomerization of RBP and G3P, respectively. This is Pyridoxal 5'-phosphate synthase subunit PdxS from Francisella tularensis.